The following is a 771-amino-acid chain: Polymeric immunoglobulin receptor (771 aa).

The first 18 residues, 1-18, serve as a signal peptide directing secretion; the sequence is MRLYLFTLLVTVFSGVST. Over 19-645 the chain is Extracellular; sequence KSPIFGPQEV…DGQSRSSSSK (627 aa). One can recognise an Ig-like V-type 1; required for binding to polymeric IgA and IgM domain in the interval 21-120; the sequence is PIFGPQEVSS…GLGTSNRGLS (100 aa). A disulfide bridge connects residues Cys-40 and Cys-110. Residues Asn-90, Asn-147, Asn-170, and Asn-206 are each glycosylated (N-linked (GlcNAc...) asparagine). Ig-like V-type domains follow at residues 135–237, 245–351, 352–457, and 463–563; these read SDTH…DLQV, LYKD…ESTI, PNRR…LQVA, and PNLE…IYIA. Intrachain disulfides connect Cys-152/Cys-220, Cys-257/Cys-324, and Cys-370/Cys-440. Residues Asn-420 and Asn-471 are each glycosylated (N-linked (GlcNAc...) asparagine). Cys-484 and Cys-546 are disulfide-bonded. Positions 622-641 are disordered; that stretch reads QAQENRASGDAGSADGQSRS. Over residues 627-641 the composition is skewed to low complexity; it reads RASGDAGSADGQSRS. A helical membrane pass occupies residues 646–668; sequence VLFSTLVPLGLVLAVGAIAVWVA. Over 669–771 the chain is Cytoplasmic; sequence RVRHRKNVDR…AQVHDGPQEA (103 aa). Residues Ser-680, Ser-689, Ser-696, and Ser-742 each carry the phosphoserine modification.

In terms of assembly, interacts (mainly via CDR1-like domain) with dimeric IgA. Interacts (mainly via CDR2-like domain) with pentameric IgM. As to quaternary structure, either free or part of the secretory IgA (sIgA) complex that consists of two, four or five IgA monomers, and two additional non-Ig polypeptides, namely the JCHAIN and the secretory component (the proteolytic product of PIGR). Free secretory component interacts with bacterial antigens toxA of C.difficile and eae of E.coli. N-glycosylated. N-glycosylation is required for anchoring IgA molecules to mucus, but is not necessary for Ig binding.

Its subcellular location is the cell membrane. The protein localises to the secreted. In terms of biological role, mediates selective transcytosis of polymeric IgA and IgM across mucosal epithelial cells. Binds polymeric IgA and IgM at the basolateral surface of epithelial cells. The complex is then transported across the cell to be secreted at the apical surface. During this process, a cleavage occurs that separates the extracellular (known as the secretory component) from the transmembrane segment. Functionally, through its N-linked glycans ensures anchoring of secretory IgA (sIgA) molecules to mucus lining the epithelial surface to neutralize extracellular pathogens. On its own (free form) may act as a non-specific microbial scavenger to prevent pathogen interaction with epithelial cells. The polypeptide is Polymeric immunoglobulin receptor (Pigr) (Mus musculus (Mouse)).